We begin with the raw amino-acid sequence, 289 residues long: Metal-staphylopine import system permease protein CntC (289 aa).

Helical transmembrane passes span 13–33 (AVIA…APLV), 77–97 (LLYV…LGFL), 115–135 (VMLA…FGMG), 194–214 (IAII…GFSF), and 249–269 (IAIV…QIAI). Residues 73–262 (IRPSLLYVFV…IIVMAFNFLS (190 aa)) enclose the ABC transmembrane type-1 domain.

The protein belongs to the binding-protein-dependent transport system permease family. In terms of assembly, the complex is composed of two ATP-binding proteins (CntD and CntF), two transmembrane proteins (CntB and CntC) and a solute-binding protein (CntA).

Its subcellular location is the cell membrane. Functionally, part of the ABC transporter complex CntABCDF (Opp1) involved in the uptake of metal in complex with the metallophore staphylopine (StP). May be involved in the import of a large array of divalent metals ions such as nickel, cobalt, zinc, copper and iron. Probably responsible for the translocation of the substrate across the membrane. The sequence is that of Metal-staphylopine import system permease protein CntC from Staphylococcus aureus (strain Mu50 / ATCC 700699).